A 158-amino-acid polypeptide reads, in one-letter code: PRA1 family protein 2 (158 aa).

The next 4 helical transmembrane spans lie at 36 to 58, 62 to 79, 88 to 108, and 113 to 133; these read NLNFYSGNYIAIVAVVLLITLFT, LLVAILLLGAIGYYLFFV, FAVLTPMIQMVILGVVSVIVI, and GLTLFYTTLVSLLFVLAHSAL.

Belongs to the PRA1 family.

It is found in the membrane. Its function is as follows. May act as a general Rab protein regulator. The chain is PRA1 family protein 2 (prafB) from Dictyostelium discoideum (Social amoeba).